An 873-amino-acid chain; its full sequence is MEIPRLLPARGTPQGAGGGGCPAGGGGVHRAPASLACQAPTRRLLLLRGAQDGGPGPRSAEAQRASRGLGPSLNRLAPRPDHRSSGGGRGGGAGGGGGGSGGGGGGGGGGGGGGGGGGSRGGSDDFFLLLLDPVGGDVETVGTEQAGAPVRREEAGAGPRPERRQSAGPPAGRPEPGPRCLSAVPAASPLPAAGPGPAAAAAAAAAAAFAGTITIHNQDLLLRFENGVLTLTTPPLPAWEPGVAPFPQPQPPPQPGALIAPQAAAAGFPPAAAAAAAAAAAGAQLGDCPELPPDLLLAEPAEPAACPAPPEEEAEAPAAAAAQSPRGPAGPGPGPGVVLYLCPEAQCGQTFAKKHQLKVHLLTHSSSQGQRPFKCPLSGCGWTFTTSYKLKRHLQSHDKLRPFGCPVQGCGKSFTTVYNLKAHMKGHEQENSFKCEVCEESFPTQAKLSTHQRSHFEPERPYQCAFSGCKKTFITVSALFSHNRAHFREQELFACSFPGCSKQYDKACRLKIHLRSHTGERPFLCDFDGCGWNFTSMSKLLRHKRKHEDDRRFTCPVEGCGKSFTRAEHLKGHSITHLGTKPFVCPVEGCCARFSARSSLYIHSKKHLQDVGAWKSRCPVPTCNKLFTSKHSMKTHMTKRHNLSQDLLAQLEAANSLTPSSELTSPGQSDLSGAELVSLFSDVPGHGSAAVLDTALVNSGILTIDVASVNSSLAGSLPADNNSNNHSLGQAAEPRALRGAPSDLPQSLDTSLFFGTSVAGYQHSPLDMDDVSAGNVGLFGSLALKNSSLEPQALTPSNKLTVDTEALTPSSTLCENSVSELLTPAKAEWNVHPESDFFGHEEETQFGFSHPTGSHGSQKDTDLITVTGTPFLV.

Disordered stretches follow at residues 1 to 23 (MEIP…GCPA), 48 to 120 (RGAQ…GGSR), 138 to 184 (VETV…LSAV), 240 to 259 (EPGV…GALI), and 301 to 330 (AEPA…GPAG). Composition is skewed to gly residues over residues 14–23 (QGAGGGGCPA) and 85–120 (SGGG…GGSR). Residue R89 is modified to Omega-N-methylarginine. The segment covering 150–165 (VRREEAGAGPRPERRQ) has biased composition (basic and acidic residues). The span at 240–255 (EPGVAPFPQPQPPPQP) shows a compositional bias: pro residues. A compositionally biased stretch (low complexity) spans 316 to 327 (APAAAAAQSPRG). 10 C2H2-type zinc fingers span residues 340–364 (YLCP…LLTH), 373–397 (FKCP…LQSH), 403–427 (FGCP…MKGH), 433–455 (FKCE…QRSH), 462–486 (YQCA…NRAH), 493–517 (FACS…LRSH), 523–547 (FLCD…KRKH), 553–577 (FTCP…SITH), 583–607 (FVCP…SKKH), and 616–641 (SRCP…TKRH). Residues 340 to 646 (YLCPEAQCGQ…MTKRHNLSQD (307 aa)) are required for interaction with ZXDC. The required for transcriptional activation stretch occupies residues 645 to 776 (QDLLAQLEAA…DMDDVSAGNV (132 aa)).

The protein belongs to the ZXD family. In terms of assembly, self-associates. Interacts with ZXDC and CIITA.

It is found in the nucleus. Its function is as follows. Cooperates with CIITA to promote transcription of MHC class I and MHC class II genes. The polypeptide is Zinc finger X-linked protein ZXDB (Zxdb) (Mus musculus (Mouse)).